A 478-amino-acid chain; its full sequence is Cytochrome c-552 (478 aa).

The first 26 residues, 1-26, serve as a signal peptide directing secretion; sequence MTRIKINARRIFSLLIPFFFFTSVHA. H94 contributes to the heme c binding site. Heme is bound by residues C122, C125, and K126. C160, C163, H164, C209, C212, and H213 together coordinate heme c. The Ca(2+) site is built by E215, Y216, K261, and Q263. Residue Y216 coordinates substrate. A substrate-binding site is contributed by H264. H275, C282, C285, H286, H301, C314, C317, H318, and H393 together coordinate heme c.

Belongs to the cytochrome c-552 family. Requires Ca(2+) as cofactor. The cofactor is heme c.

The protein resides in the periplasm. It carries out the reaction 6 Fe(III)-[cytochrome c] + NH4(+) + 2 H2O = 6 Fe(II)-[cytochrome c] + nitrite + 8 H(+). It participates in nitrogen metabolism; nitrate reduction (assimilation). Its function is as follows. Catalyzes the reduction of nitrite to ammonia, consuming six electrons in the process. In Escherichia coli O6:H1 (strain CFT073 / ATCC 700928 / UPEC), this protein is Cytochrome c-552.